The chain runs to 246 residues: IPSRPVGGPCYLGKLTMLAPKHTDILKVLVNSSRTGIRRKRSTSHLDDTCSDEVQLWGPTARIFASILAPGVAAAQALREIERLACWSVKQANLTTSLLGDLLDDVTSIRHAVLQNRAAIDFLLLAHGHGCEDVAGMCCFNLSDQSESIQKKFQLMKEHVNKIGVDSDLIGSWLRGLFGGIGEWAVHLLKGLLLGLVVILLLVVCLPCLLQMLCGNRRKMINNSISYHTEYKKLQKACGQPESRIV.

At 1-192 (IPSRPVGGPC…EWAVHLLKGL (192 aa)) the chain is on the extracellular side. Asn31 is a glycosylation site (N-linked (GlcNAc...) asparagine; by host). A disulfide bridge links Cys50 with Cys86. The interval 58–78 (GPTARIFASILAPGVAAAQAL) is fusion peptide. The stretch at 75 to 125 (AQALREIERLACWSVKQANLTTSLLGDLLDDVTSIRHAVLQNRAAIDFLLL) forms a coiled coil. The N-linked (GlcNAc...) asparagine; by host glycan is linked to Asn93. The immunosuppression stretch occupies residues 114-130 (LQNRAAIDFLLLAHGHG). Cys131 and Cys138 are joined by a disulfide. N-linked (GlcNAc...) asparagine; by host glycosylation is present at Asn141. Positions 143 to 173 (SDQSESIQKKFQLMKEHVNKIGVDSDLIGSW) form a coiled coil. Residues 193–213 (LLGLVVILLLVVCLPCLLQML) traverse the membrane as a helical segment. S-palmitoyl cysteine; by host attachment occurs at residues Cys205 and Cys208. Residues 214 to 246 (CGNRRKMINNSISYHTEYKKLQKACGQPESRIV) are Cytoplasmic-facing.

Belongs to the Alpharetroviruses envelope glycoprotein family. As to quaternary structure, heterodimer with the transmembrane protein. The mature envelope protein (Env) consists of a trimer of SU-TM heterodimers attached by a labile interchain disulfide bond. Interacts with the host cell entry receptor TVA isoforms pg900 and pg800; this interaction allows the viral attachment. In terms of assembly, heterodimer with the surface protein. The mature envelope protein (Env) consists of a trimer of SU-TM heterodimers attached by a labile interchain disulfide bond. In terms of processing, specific enzymatic cleavages in vivo yield mature proteins. Envelope glycoproteins are synthesized as an inactive precursor that is N-glycosylated and processed likely by host cell furin or by a furin-like protease in the Golgi to yield the mature SU and TM proteins. The cleavage site between SU and TM requires the minimal sequence [KR]-X-[KR]-R. Post-translationally, the transmembrane protein is palmitoylated. Palmitoylation is necessary for glycoprotein function and infectivity.

The protein localises to the virion membrane. Its subcellular location is the host cell membrane. Functionally, the surface protein (SU) attaches the virus to the host cell entry receptor TVA. This interaction triggers the refolding of the transmembrane protein (TM) thereby unmasking its fusion peptide and the formation of a reactive thiolate to activate its fusogenic potential. Fusion occurs at the host cell plasma membrane. In terms of biological role, the transmembrane protein (TM) acts as a class I viral fusion protein. Under the current model, the protein has at least 3 conformational states: pre-fusion native state, pre-hairpin intermediate state, and post-fusion hairpin state. During viral and target cell membrane fusion, the coiled coil regions (heptad repeats) assume a trimer-of-hairpins structure, positioning the fusion peptide in close proximity to the C-terminal region of the ectodomain. The formation of this structure appears to drive apposition and subsequent fusion of viral and target cell membranes. Membranes fusion leads to delivery of the nucleocapsid into the cytoplasm. This is Envelope glycoprotein gp95 (env) from Rous sarcoma virus subgroup A (strain Schmidt-Ruppin) (RSV-SR-A).